A 258-amino-acid polypeptide reads, in one-letter code: MVLIRVLANLLILQLSYAQKSPELVVGGDECNINEHRSLVAIFNSTGFFCSGTLINQEWVVTAAHCDSNNFKMKFGAHSQKVLNEDEQIRNPKEKFICPNKKNNEVLDKDIMLIKLDSSVSNSEHIAPLSLPSSPPSVGSVCRIMGWGSITPTKVTYPDVPYCANINLLDDAECKPGYPELLPEYRTLCAGIVQGGKDTCGGDSGGPLICNGQFHGIVSYGAHPCGQSLKPGIYTTVFDYNDWIKSIIAGNTAATCPP.

The N-terminal stretch at 1–18 is a signal peptide; sequence MVLIRVLANLLILQLSYA. Residues 19–24 constitute a propeptide that is removed on maturation; that stretch reads QKSPEL. Positions 25–249 constitute a Peptidase S1 domain; sequence VVGGDECNIN…YNDWIKSIIA (225 aa). Cystine bridges form between Cys31-Cys163, Cys50-Cys66, Cys98-Cys256, Cys142-Cys210, Cys174-Cys189, and Cys200-Cys225. Asn44 is a glycosylation site (N-linked (GlcNAc...) asparagine). Active-site charge relay system residues include His65 and Asp110. The Charge relay system role is filled by Ser204.

The protein belongs to the peptidase S1 family. Snake venom subfamily. Monomer. Expressed by the venom gland.

The protein resides in the secreted. Functionally, snake venom serine protease that may act in the hemostasis system of the prey. The chain is Snake venom serine protease PA from Trimeresurus stejnegeri (Chinese green tree viper).